Consider the following 31-residue polypeptide: Cytochrome b6-f complex subunit 6 (31 aa).

A helical transmembrane segment spans residues I4 to S26.

The protein belongs to the PetL family. In terms of assembly, the 4 large subunits of the cytochrome b6-f complex are cytochrome b6, subunit IV (17 kDa polypeptide, PetD), cytochrome f and the Rieske protein, while the 4 small subunits are PetG, PetL, PetM and PetN. The complex functions as a dimer.

The protein localises to the plastid. The protein resides in the chloroplast thylakoid membrane. Component of the cytochrome b6-f complex, which mediates electron transfer between photosystem II (PSII) and photosystem I (PSI), cyclic electron flow around PSI, and state transitions. PetL is important for photoautotrophic growth as well as for electron transfer efficiency and stability of the cytochrome b6-f complex. The sequence is that of Cytochrome b6-f complex subunit 6 from Lactuca sativa (Garden lettuce).